The chain runs to 293 residues: Ribosomal RNA small subunit methyltransferase A (293 aa).

S-adenosyl-L-methionine contacts are provided by Asn-29, Leu-31, Gly-56, Glu-77, Asp-102, and Asn-127.

Belongs to the class I-like SAM-binding methyltransferase superfamily. rRNA adenine N(6)-methyltransferase family. RsmA subfamily.

The protein localises to the cytoplasm. The catalysed reaction is adenosine(1518)/adenosine(1519) in 16S rRNA + 4 S-adenosyl-L-methionine = N(6)-dimethyladenosine(1518)/N(6)-dimethyladenosine(1519) in 16S rRNA + 4 S-adenosyl-L-homocysteine + 4 H(+). Functionally, specifically dimethylates two adjacent adenosines (A1518 and A1519) in the loop of a conserved hairpin near the 3'-end of 16S rRNA in the 30S particle. May play a critical role in biogenesis of 30S subunits. The sequence is that of Ribosomal RNA small subunit methyltransferase A from Geobacillus thermodenitrificans (strain NG80-2).